A 143-amino-acid polypeptide reads, in one-letter code: Ribonuclease VapC33 (143 aa).

Mg(2+) contacts are provided by aspartate 5 and aspartate 108.

The protein belongs to the PINc/VapC protein family. The cofactor is Mg(2+).

Toxic component of a type II toxin-antitoxin (TA) system. An RNase. Its toxic effect is neutralized by coexpression with cognate antitoxin VapB33. The protein is Ribonuclease VapC33 of Mycobacterium tuberculosis (strain CDC 1551 / Oshkosh).